The following is a 217-amino-acid chain: tRNA (guanine-N(7)-)-methyltransferase (217 aa).

4 residues coordinate S-adenosyl-L-methionine: E44, E69, D96, and D118. D118 is an active-site residue. Residues K122, D154, and 191-194 each bind substrate; that span reads TEYE.

This sequence belongs to the class I-like SAM-binding methyltransferase superfamily. TrmB family.

The enzyme catalyses guanosine(46) in tRNA + S-adenosyl-L-methionine = N(7)-methylguanosine(46) in tRNA + S-adenosyl-L-homocysteine. Its pathway is tRNA modification; N(7)-methylguanine-tRNA biosynthesis. Its function is as follows. Catalyzes the formation of N(7)-methylguanine at position 46 (m7G46) in tRNA. This is tRNA (guanine-N(7)-)-methyltransferase from Bacillus thuringiensis (strain Al Hakam).